The sequence spans 216 residues: Phosphoserine phosphatase (216 aa).

Residue Asp10 is the Nucleophile of the active site. Asp10 and Asp12 together coordinate Mg(2+). The active-site Proton donor is Asp12. Substrate contacts are provided by residues Glu19, Arg55, 98–99 (SG), and Lys143. Asp166 contacts Mg(2+). Substrate is bound at residue Asn169.

It belongs to the HAD-like hydrolase superfamily. SerB family. Mg(2+) is required as a cofactor.

It catalyses the reaction O-phospho-L-serine + H2O = L-serine + phosphate. The catalysed reaction is O-phospho-D-serine + H2O = D-serine + phosphate. It participates in amino-acid biosynthesis; L-serine biosynthesis; L-serine from 3-phospho-D-glycerate: step 3/3. This Lactococcus lactis subsp. lactis (strain IL1403) (Streptococcus lactis) protein is Phosphoserine phosphatase.